We begin with the raw amino-acid sequence, 943 residues long: Protein translocase subunit SecA (943 aa).

ATP is bound by residues Q90, 108–112 (GEGKT), and D509. Residues 534–576 (KPDNEHKPPIPQQRSSKAGGGFASKSESISNKNSKSSGASLFP) are disordered. Residues 556–570 (ASKSESISNKNSKSS) are compositionally biased toward low complexity.

This sequence belongs to the SecA family. Monomer and homodimer. Part of the essential Sec protein translocation apparatus which comprises SecA, SecYEG and auxiliary proteins SecDF. Other proteins may also be involved.

It is found in the cell inner membrane. It localises to the cellular thylakoid membrane. The protein resides in the cytoplasm. The catalysed reaction is ATP + H2O + cellular proteinSide 1 = ADP + phosphate + cellular proteinSide 2.. Its function is as follows. Part of the Sec protein translocase complex. Interacts with the SecYEG preprotein conducting channel. Has a central role in coupling the hydrolysis of ATP to the transfer of proteins into and across the cell membrane, serving as an ATP-driven molecular motor driving the stepwise translocation of polypeptide chains across the membrane. Probably participates in protein translocation into and across both the cytoplasmic and thylakoid membranes in cyanobacterial cells. The sequence is that of Protein translocase subunit SecA from Prochlorococcus marinus (strain MIT 9515).